Consider the following 260-residue polypeptide: Hydroxyethylthiazole kinase 1 (260 aa).

M39 contacts substrate. 2 residues coordinate ATP: R115 and T160. A substrate-binding site is contributed by G187.

The protein belongs to the Thz kinase family. It depends on Mg(2+) as a cofactor.

It carries out the reaction 5-(2-hydroxyethyl)-4-methylthiazole + ATP = 4-methyl-5-(2-phosphooxyethyl)-thiazole + ADP + H(+). The protein operates within cofactor biosynthesis; thiamine diphosphate biosynthesis; 4-methyl-5-(2-phosphoethyl)-thiazole from 5-(2-hydroxyethyl)-4-methylthiazole: step 1/1. Functionally, catalyzes the phosphorylation of the hydroxyl group of 4-methyl-5-beta-hydroxyethylthiazole (THZ). The chain is Hydroxyethylthiazole kinase 1 from Streptococcus pneumoniae (strain P1031).